A 216-amino-acid polypeptide reads, in one-letter code: Pyrophosphatase PpaX (216 aa).

Catalysis depends on Asp-12, which acts as the Nucleophile.

Belongs to the HAD-like hydrolase superfamily. PpaX family. Requires Mg(2+) as cofactor.

The catalysed reaction is diphosphate + H2O = 2 phosphate + H(+). Its function is as follows. Hydrolyzes pyrophosphate formed during P-Ser-HPr dephosphorylation by HPrK/P. Might play a role in controlling the intracellular pyrophosphate pool. In Bacillus velezensis (strain DSM 23117 / BGSC 10A6 / LMG 26770 / FZB42) (Bacillus amyloliquefaciens subsp. plantarum), this protein is Pyrophosphatase PpaX.